Here is a 505-residue protein sequence, read N- to C-terminus: Histidine ammonia-lyase (505 aa).

Residues 141–143 (ASG) constitute a cross-link (5-imidazolinone (Ala-Gly)). S142 is modified (2,3-didehydroalanine (Ser)).

This sequence belongs to the PAL/histidase family. Post-translationally, contains an active site 4-methylidene-imidazol-5-one (MIO), which is formed autocatalytically by cyclization and dehydration of residues Ala-Ser-Gly.

Its subcellular location is the cytoplasm. It carries out the reaction L-histidine = trans-urocanate + NH4(+). The protein operates within amino-acid degradation; L-histidine degradation into L-glutamate; N-formimidoyl-L-glutamate from L-histidine: step 1/3. This chain is Histidine ammonia-lyase, found in Bacillus mycoides (strain KBAB4) (Bacillus weihenstephanensis).